The following is a 1086-amino-acid chain: NAD(P) transhydrogenase, mitochondrial (1086 aa).

The N-terminal 43 residues, 1-43, are a transit peptide targeting the mitochondrion; sequence MAHLLKTVVAGCSCPFLSNLGSSKVLPGKRDFVRTLRTHQALW. The Mitochondrial matrix segment spans residues 44-474; it reads CKSPVKPGIP…TVSMYTKTLT (431 aa). K70 carries the post-translational modification N6-acetyllysine. K117 carries the N6-succinyllysine modification. 182–184 contacts NAD(+); the sequence is RVT. K224 is subject to N6-succinyllysine. NAD(+) is bound by residues V237, 257 to 259, and G287; that span reads DTR. An N6-succinyllysine modification is found at K294. NAD(+) is bound by residues E300 and L319. Residue K331 is modified to N6-succinyllysine. An N6-acetyllysine modification is found at K397. The next 4 membrane-spanning stretches (helical) occupy residues 475–493, 501–521, 527–546, and 558–578; these read TASV…GIVA, MVTT…GVTP, LMSV…LALM, and SLAA…FLVT. The Mitochondrial matrix portion of the chain corresponds to 579–595; sequence QRMLDMFKRPTDPPEYN. The next 5 helical transmembrane spans lie at 596 to 616, 622 to 642, 646 to 666, 672 to 691, and 702 to 722; these read YLYL…LYGG, IMYL…STQG, LGNA…LGGL, LLAQ…LTIA, and LVAA…MAEY. The Cytoplasmic portion of the chain corresponds to 723-739; sequence IVEYPHFAMDATSNFTK. 5 helical membrane passes run 740–760, 778–797, 801–819, 833–853, and 857–879; these read IVAY…LVAY, HALN…PFMA, FTTG…TLMG, VVIT…GFLL, and LLTI…MCVA. At 880–1086 the chain is on the mitochondrial matrix side; it reads MNRSLANVIL…QAKVRESYQK (207 aa). NADP(+)-binding positions include Y933, 965–970, 1007–1011, 1026–1027, 1042–1049, and 1068–1069; these read VAGRMP, GANDT, GM, KRSLGVGY, and DA. The residue at position 1079 (K1079) is an N6-succinyllysine.

It in the N-terminal section; belongs to the AlaDH/PNT family. In the C-terminal section; belongs to the PNT beta subunit family. As to quaternary structure, homodimer. As to expression, widely expressed with expression most readily detectable in adrenal, heart, kidney, thyroid and adipose tissues.

The protein resides in the mitochondrion inner membrane. The catalysed reaction is NAD(+) + NADPH + H(+)(in) = NADH + NADP(+) + H(+)(out). Its function is as follows. The transhydrogenation between NADH and NADP is coupled to respiration and ATP hydrolysis and functions as a proton pump across the membrane. May play a role in reactive oxygen species (ROS) detoxification in the adrenal gland. This is NAD(P) transhydrogenase, mitochondrial (Nnt) from Mus musculus (Mouse).